A 157-amino-acid polypeptide reads, in one-letter code: Transcription elongation factor GreA (157 aa).

Positions 25–43 are enriched in basic and acidic residues; it reads EGRAKVAEQLSEARDKGDL. A disordered region spans residues 25–47; that stretch reads EGRAKVAEQLSEARDKGDLSENA. Residues 43–79 are a coiled coil; that stretch reads LSENAEYDAAKEAQEILERRIAKLEELMINARVINKD.

Belongs to the GreA/GreB family.

Functionally, necessary for efficient RNA polymerase transcription elongation past template-encoded arresting sites. The arresting sites in DNA have the property of trapping a certain fraction of elongating RNA polymerases that pass through, resulting in locked ternary complexes. Cleavage of the nascent transcript by cleavage factors such as GreA or GreB allows the resumption of elongation from the new 3'terminus. GreA releases sequences of 2 to 3 nucleotides. This is Transcription elongation factor GreA from Amoebophilus asiaticus (strain 5a2).